Consider the following 456-residue polypeptide: GTPase Der (456 aa).

EngA-type G domains lie at 4-169 (PVVA…PSKD) and 178-353 (VQLA…DQSR). Residues 10–17 (GRPNVGKS), 57–61 (DTGGL), 120–123 (NKCE), 184–191 (GRPNVGKS), 231–235 (DTAGI), and 296–299 (NKWD) each bind GTP. Residues 354 to 439 (RRVTTSVVNE…PIKLFWRGKQ (86 aa)) enclose the KH-like domain.

Belongs to the TRAFAC class TrmE-Era-EngA-EngB-Septin-like GTPase superfamily. EngA (Der) GTPase family. Associates with the 50S ribosomal subunit.

Its function is as follows. GTPase that plays an essential role in the late steps of ribosome biogenesis. The chain is GTPase Der from Prochlorococcus marinus (strain NATL1A).